A 1462-amino-acid polypeptide reads, in one-letter code: Tyrosine-protein phosphatase 69D (1462 aa).

The N-terminal stretch at 1–28 is a signal peptide; that stretch reads MALLYRRMSMLLNIILAYIFLCAICVQG. Ig-like C2-type domains lie at 29–125 and 131–230; these read SVKQ…TEFQ and PSKV…KEIT. Topologically, residues 29–805 are extracellular; sequence SVKQEWAEIG…MDYYLSIGVK (777 aa). Asn40, Asn58, Asn64, Asn85, Asn109, Asn119, Asn162, Asn191, Asn196, Asn209, Asn255, Asn288, Asn302, Asn429, Asn442, Asn451, Asn516, Asn613, Asn701, and Asn755 each carry an N-linked (GlcNAc...) asparagine glycan. Residues Cys45 and Cys112 are joined by a disulfide bond. Cys154 and Cys214 are oxidised to a cystine. Fibronectin type-III domains follow at residues 237 to 332, 334 to 435, and 439 to 547; these read PQVS…TLSY, PIFI…TMDG, and KPTN…TPDA. The helical transmembrane segment at 806–823 threads the bilayer; the sequence is AGAVLLGVILVFIVLWVF. Over 824 to 1462 the chain is Cytoplasmic; it reads HHKKTKNELQ…LHHIAESTLD (639 aa). 2 consecutive Tyrosine-protein phosphatase domains span residues 893 to 1156 and 1187 to 1450; these read FLRE…LLDT and LEVE…IINY. Residues Cys1097 and Cys1391 each act as phosphocysteine intermediate in the active site.

Belongs to the protein-tyrosine phosphatase family. Receptor class subfamily.

The protein resides in the membrane. It carries out the reaction O-phospho-L-tyrosyl-[protein] + H2O = L-tyrosyl-[protein] + phosphate. Functionally, possible cell adhesion receptor. The sequence is that of Tyrosine-protein phosphatase 69D (Ptp69D) from Drosophila melanogaster (Fruit fly).